Consider the following 463-residue polypeptide: tRNA-2-methylthio-N(6)-dimethylallyladenosine synthase (463 aa).

In terms of domain architecture, MTTase N-terminal spans 19 to 135 (GSYWITTFGC…LESLLNQVDS (117 aa)). Residues Cys28, Cys64, Cys98, Cys170, Cys174, and Cys177 each contribute to the [4Fe-4S] cluster site. Residues 156 to 393 (RDSSICGWVN…NSLVENIAKE (238 aa)) form the Radical SAM core domain. Residues 396–463 (QRYKNTSQEI…RPFSLTAKLL (68 aa)) form the TRAM domain.

The protein belongs to the methylthiotransferase family. MiaB subfamily. As to quaternary structure, monomer. [4Fe-4S] cluster serves as cofactor.

The protein localises to the cytoplasm. It catalyses the reaction N(6)-dimethylallyladenosine(37) in tRNA + (sulfur carrier)-SH + AH2 + 2 S-adenosyl-L-methionine = 2-methylsulfanyl-N(6)-dimethylallyladenosine(37) in tRNA + (sulfur carrier)-H + 5'-deoxyadenosine + L-methionine + A + S-adenosyl-L-homocysteine + 2 H(+). In terms of biological role, catalyzes the methylthiolation of N6-(dimethylallyl)adenosine (i(6)A), leading to the formation of 2-methylthio-N6-(dimethylallyl)adenosine (ms(2)i(6)A) at position 37 in tRNAs that read codons beginning with uridine. This chain is tRNA-2-methylthio-N(6)-dimethylallyladenosine synthase, found in Prochlorococcus marinus (strain NATL2A).